Reading from the N-terminus, the 77-residue chain is Serine protease inhibitor 3 (77 aa).

A signal peptide spans 1-17 (MMFTPLIVLTLLVLATA). Disulfide bonds link Cys-21–Cys-53, Cys-30–Cys-48, Cys-33–Cys-44, and Cys-55–Cys-68. The TIL domain maps to 21-74 (CGPNEQWSGCPKCELQSGESDKPCATICGEPKCYCSPDKYRRIPDGRCIRKIQC).

Its subcellular location is the secreted. Its function is as follows. Defends the organism against the host's proteinases. The chain is Serine protease inhibitor 3 from Anisakis simplex (Herring worm).